The sequence spans 130 residues: MTLLDPLANALSHITNSERVGKKEVYIKPASKLIGEVLRVMLENGYIGEFELIDDGRAGIYRVQLIGKINKAGAIKPRFPVKARDYEKWEKRFLPAFEFGILIVSTSQGVMTHKEALEKGIGGRLIAYVY.

This sequence belongs to the universal ribosomal protein uS8 family. Part of the 30S ribosomal subunit.

Functionally, one of the primary rRNA binding proteins, it binds directly to 16S rRNA central domain where it helps coordinate assembly of the platform of the 30S subunit. In Thermococcus kodakarensis (strain ATCC BAA-918 / JCM 12380 / KOD1) (Pyrococcus kodakaraensis (strain KOD1)), this protein is Small ribosomal subunit protein uS8.